We begin with the raw amino-acid sequence, 214 residues long: A-type ATP synthase subunit D (214 aa).

The protein belongs to the V-ATPase D subunit family. As to quaternary structure, has multiple subunits with at least A(3), B(3), C, D, E, F, H, I and proteolipid K(x).

The protein resides in the cell membrane. Functionally, component of the A-type ATP synthase that produces ATP from ADP in the presence of a proton gradient across the membrane. The polypeptide is A-type ATP synthase subunit D (Thermococcus gammatolerans (strain DSM 15229 / JCM 11827 / EJ3)).